Consider the following 303-residue polypeptide: Heme A synthase (303 aa).

The Cytoplasmic segment spans residues Met1 to Lys8. The helical transmembrane segment at Trp9 to Thr29 threads the bilayer. Residues Lys30 to Ser67 are Extracellular-facing. Cysteines 37 and 44 form a disulfide. Glu60 is a catalytic residue. Residue His63 participates in heme o binding. The helical transmembrane segment at Ala68 to Ile88 threads the bilayer. The Cytoplasmic segment spans residues Lys89–Pro93. Residues Leu94 to Ile114 traverse the membrane as a helical segment. At Trp115–His125 the chain is on the extracellular side. A heme o-binding site is contributed by His125. A helical transmembrane segment spans residues Phe126 to Ile146. The Cytoplasmic segment spans residues Asp147–Arg163. Residues Leu164–His184 form a helical membrane-spanning segment. The Extracellular portion of the chain corresponds to Ala185 to Arg215. Position 214 (His214) interacts with heme b. The helical transmembrane segment at Ile216–Tyr236 threads the bilayer. The Cytoplasmic segment spans residues Pro237–Tyr244. A helical transmembrane segment spans residues Gly245–Met265. Over Thr266 to Leu270 the chain is Extracellular. A helical membrane pass occupies residues Ile271–Ile291. Residue His276 participates in heme b binding. The Cytoplasmic segment spans residues Met292–Gln303.

It belongs to the COX15/CtaA family. Type 1 subfamily. In terms of assembly, interacts with CtaB. It depends on heme b as a cofactor.

It localises to the cell membrane. The catalysed reaction is Fe(II)-heme o + 2 A + H2O = Fe(II)-heme a + 2 AH2. The protein operates within porphyrin-containing compound metabolism; heme A biosynthesis; heme A from heme O: step 1/1. In terms of biological role, catalyzes the conversion of heme O to heme A by two successive hydroxylations of the methyl group at C8. The first hydroxylation forms heme I, the second hydroxylation results in an unstable dihydroxymethyl group, which spontaneously dehydrates, resulting in the formyl group of heme A. The chain is Heme A synthase from Staphylococcus aureus (strain bovine RF122 / ET3-1).